A 125-amino-acid polypeptide reads, in one-letter code: Small ribosomal subunit protein uS13 (125 aa).

The protein belongs to the universal ribosomal protein uS13 family. Part of the 30S ribosomal subunit. Forms a loose heterodimer with protein S19. Forms two bridges to the 50S subunit in the 70S ribosome.

Located at the top of the head of the 30S subunit, it contacts several helices of the 16S rRNA. In the 70S ribosome it contacts the 23S rRNA (bridge B1a) and protein L5 of the 50S subunit (bridge B1b), connecting the 2 subunits; these bridges are implicated in subunit movement. Contacts the tRNAs in the A and P-sites. The protein is Small ribosomal subunit protein uS13 of Gluconacetobacter diazotrophicus (strain ATCC 49037 / DSM 5601 / CCUG 37298 / CIP 103539 / LMG 7603 / PAl5).